Here is a 325-residue protein sequence, read N- to C-terminus: Protein TMED8 (325 aa).

The interval 1 to 78 is disordered; the sequence is MSDLQAAEGP…MVSPVSKDAT (78 aa). The 165-residue stretch at 159 to 323 folds into the GOLD domain; the sequence is PPCIWTFAKV…NKTLYFHIYY (165 aa). Lys169 bears the N6-acetyllysine mark. Residues 232-267 form a disordered region; that stretch reads TVQVSDSSDDEDEEEEEEEEIEEPVPAGDVERGSRS. Positions 238-254 are enriched in acidic residues; the sequence is SSDDEDEEEEEEEEIEE.

The chain is Protein TMED8 (TMED8) from Homo sapiens (Human).